We begin with the raw amino-acid sequence, 298 residues long: Multifunctional dioxygenase ausE (298 aa).

Substrate contacts are provided by arginine 72 and glutamine 127. Fe cation contacts are provided by histidine 130 and aspartate 132. Residue threonine 167 participates in substrate binding. Histidine 214 lines the Fe cation pocket. A substrate-binding site is contributed by arginine 226.

This sequence belongs to the PhyH family. Homodimer. Fe cation is required as a cofactor.

The enzyme catalyses preaustinoid A1 + 2-oxoglutarate + O2 = preaustinoid A2 + succinate + CO2 + H2O. It catalyses the reaction preaustinoid A2 + 2-oxoglutarate + O2 = preaustinoid A3 + succinate + CO2 + H2O. It carries out the reaction berkeleyone A + 2-oxoglutarate + O2 = preaustinoid A + succinate + CO2 + H2O. It participates in secondary metabolite biosynthesis; terpenoid biosynthesis. Functionally, multifunctional dioxygenase; part of the gene cluster that mediates the biosynthesis of calidodehydroaustin, a fungal meroterpenoid. The first step of the pathway is the synthesis of 3,5-dimethylorsellinic acid by the polyketide synthase ausA. 3,5-dimethylorsellinic acid is then prenylated by the polyprenyl transferase ausN. Further epoxidation by the FAD-dependent monooxygenase ausM and cyclization by the probable terpene cyclase ausL lead to the formation of protoaustinoid A. Protoaustinoid A is then oxidized to spiro-lactone preaustinoid A3 by the combined action of the FAD-binding monooxygenases ausB and ausC, and the dioxygenase ausE. Acid-catalyzed keto-rearrangement and ring contraction of the tetraketide portion of preaustinoid A3 by ausJ lead to the formation of preaustinoid A4. The aldo-keto reductase ausK, with the help of ausH, is involved in the next step by transforming preaustinoid A4 into isoaustinone which is in turn hydroxylated by the P450 monooxygenase ausI to form austinolide. The cytochrome P450 monooxygenase ausG modifies austinolide to austinol. Austinol is further acetylated to austin by the O-acetyltransferase ausP, which spontaneously changes to dehydroaustin. The cytochrome P450 monooxygenase ausR then converts dehydroaustin is into 7-dehydrodehydroaustin. The hydroxylation catalyzed by ausR permits the O-acetyltransferase ausQ to add an additional acetyl group to the molecule, leading to the formation of acetoxydehydroaustin. The short chain dehydrogenase ausT catalyzes the reduction of the double bond present between carbon atoms 1 and 2 to convert 7-dehydrodehydroaustin into 1,2-dihydro-7-hydroxydehydroaustin. AusQ catalyzes not only an acetylation reaction but also the addition of the PKS ausV diketide product to 1,2-dihydro-7-hydroxydehydroaustin, forming precalidodehydroaustin. Finally, the iron/alpha-ketoglutarate-dependent dioxygenase converts precalidodehydroaustin into calidodehydroaustin. The protein is Multifunctional dioxygenase ausE of Aspergillus calidoustus.